The primary structure comprises 469 residues: 3-isopropylmalate dehydratase large subunit (469 aa).

Residues C347, C408, and C411 each contribute to the [4Fe-4S] cluster site.

Belongs to the aconitase/IPM isomerase family. LeuC type 1 subfamily. In terms of assembly, heterodimer of LeuC and LeuD. It depends on [4Fe-4S] cluster as a cofactor.

The enzyme catalyses (2R,3S)-3-isopropylmalate = (2S)-2-isopropylmalate. It functions in the pathway amino-acid biosynthesis; L-leucine biosynthesis; L-leucine from 3-methyl-2-oxobutanoate: step 2/4. Functionally, catalyzes the isomerization between 2-isopropylmalate and 3-isopropylmalate, via the formation of 2-isopropylmaleate. This chain is 3-isopropylmalate dehydratase large subunit, found in Actinobacillus pleuropneumoniae serotype 3 (strain JL03).